A 344-amino-acid polypeptide reads, in one-letter code: Holliday junction branch migration complex subunit RuvB (344 aa).

The segment at 1-181 (MERIVTPAEM…FGVLCAMEYY (181 aa)) is large ATPase domain (RuvB-L). Residues Leu20, Arg21, Gly62, Lys65, Thr66, Thr67, 128–130 (EDY), Arg171, Tyr181, and Arg218 contribute to the ATP site. A Mg(2+)-binding site is contributed by Thr66. The small ATPAse domain (RuvB-S) stretch occupies residues 182–252 (DENQLKEIVI…EAREALELLE (71 aa)). The tract at residues 255–344 (NQGFDKVDNK…SNKGQTSFFK (90 aa)) is head domain (RuvB-H). Positions 310 and 315 each coordinate DNA.

It belongs to the RuvB family. In terms of assembly, homohexamer. Forms an RuvA(8)-RuvB(12)-Holliday junction (HJ) complex. HJ DNA is sandwiched between 2 RuvA tetramers; dsDNA enters through RuvA and exits via RuvB. An RuvB hexamer assembles on each DNA strand where it exits the tetramer. Each RuvB hexamer is contacted by two RuvA subunits (via domain III) on 2 adjacent RuvB subunits; this complex drives branch migration. In the full resolvosome a probable DNA-RuvA(4)-RuvB(12)-RuvC(2) complex forms which resolves the HJ.

Its subcellular location is the cytoplasm. It catalyses the reaction ATP + H2O = ADP + phosphate + H(+). Its function is as follows. The RuvA-RuvB-RuvC complex processes Holliday junction (HJ) DNA during genetic recombination and DNA repair, while the RuvA-RuvB complex plays an important role in the rescue of blocked DNA replication forks via replication fork reversal (RFR). RuvA specifically binds to HJ cruciform DNA, conferring on it an open structure. The RuvB hexamer acts as an ATP-dependent pump, pulling dsDNA into and through the RuvAB complex. RuvB forms 2 homohexamers on either side of HJ DNA bound by 1 or 2 RuvA tetramers; 4 subunits per hexamer contact DNA at a time. Coordinated motions by a converter formed by DNA-disengaged RuvB subunits stimulates ATP hydrolysis and nucleotide exchange. Immobilization of the converter enables RuvB to convert the ATP-contained energy into a lever motion, pulling 2 nucleotides of DNA out of the RuvA tetramer per ATP hydrolyzed, thus driving DNA branch migration. The RuvB motors rotate together with the DNA substrate, which together with the progressing nucleotide cycle form the mechanistic basis for DNA recombination by continuous HJ branch migration. Branch migration allows RuvC to scan DNA until it finds its consensus sequence, where it cleaves and resolves cruciform DNA. The polypeptide is Holliday junction branch migration complex subunit RuvB (Clostridium botulinum (strain Alaska E43 / Type E3)).